The chain runs to 505 residues: Chemotaxis regulatory protein ChePep (505 aa).

Disordered regions lie at residues 154 to 403 (EPNN…EDIP) and 420 to 465 (EAVA…SSPL). Basic and acidic residues-rich tracts occupy residues 172–263 (EEVK…EKTQ), 289–311 (ENKE…EVVT), 337–346 (QAHELEKQEI), 359–373 (QDKE…KEET), and 386–398 (PQEK…HYES). The span at 440-451 (TETSKNENNTET) shows a compositional bias: low complexity.

In terms of assembly, interacts with CheZ; the interaction is essential for each other polar localization.

Its subcellular location is the cytoplasm. In terms of biological role, plays an essential role in chemotaxis. Regulates flagellar rotation through the formation of a complex with chemotaxis protein CheZ. Plays a major role in colonization of the stomach. The protein is Chemotaxis regulatory protein ChePep of Helicobacter pylori (strain ATCC 700392 / 26695) (Campylobacter pylori).